The sequence spans 605 residues: Elongation factor 4 (605 aa).

Positions S4–K186 constitute a tr-type G domain. Residues D16–T21 and N133–D136 each bind GTP.

This sequence belongs to the TRAFAC class translation factor GTPase superfamily. Classic translation factor GTPase family. LepA subfamily.

It is found in the cell membrane. It carries out the reaction GTP + H2O = GDP + phosphate + H(+). In terms of biological role, required for accurate and efficient protein synthesis under certain stress conditions. May act as a fidelity factor of the translation reaction, by catalyzing a one-codon backward translocation of tRNAs on improperly translocated ribosomes. Back-translocation proceeds from a post-translocation (POST) complex to a pre-translocation (PRE) complex, thus giving elongation factor G a second chance to translocate the tRNAs correctly. Binds to ribosomes in a GTP-dependent manner. This Dehalococcoides mccartyi (strain ATCC BAA-2266 / KCTC 15142 / 195) (Dehalococcoides ethenogenes (strain 195)) protein is Elongation factor 4.